Here is a 351-residue protein sequence, read N- to C-terminus: S-adenosylmethionine:tRNA ribosyltransferase-isomerase (351 aa).

Belongs to the QueA family. Monomer.

It is found in the cytoplasm. The catalysed reaction is 7-aminomethyl-7-carbaguanosine(34) in tRNA + S-adenosyl-L-methionine = epoxyqueuosine(34) in tRNA + adenine + L-methionine + 2 H(+). It functions in the pathway tRNA modification; tRNA-queuosine biosynthesis. In terms of biological role, transfers and isomerizes the ribose moiety from AdoMet to the 7-aminomethyl group of 7-deazaguanine (preQ1-tRNA) to give epoxyqueuosine (oQ-tRNA). In Sphingopyxis alaskensis (strain DSM 13593 / LMG 18877 / RB2256) (Sphingomonas alaskensis), this protein is S-adenosylmethionine:tRNA ribosyltransferase-isomerase.